The following is a 315-amino-acid chain: KH domain-containing protein At5g56140 (315 aa).

Disordered regions lie at residues 1 to 53 (MMMM…GGLR) and 136 to 158 (SQFP…SPGS). Gly residues predominate over residues 7–28 (LGGGGGGGGGSGGGIGGGGGGR). 2 stretches are compositionally biased toward polar residues: residues 31 to 53 (TYSS…GGLR) and 136 to 146 (SQFPSERSVPS). The KH domain occupies 171–238 (DIPVDNYPNF…EHLNEPLHIL (68 aa)). Residues 289 to 315 (REEGSPMSGSVSPYNSLGMKRAKTREG) are disordered. Ser300 is subject to Phosphoserine.

Its subcellular location is the nucleus. The chain is KH domain-containing protein At5g56140 from Arabidopsis thaliana (Mouse-ear cress).